The following is a 42-amino-acid chain: Cytochrome b559 subunit beta (42 aa).

Residues 17 to 33 form a helical membrane-spanning segment; sequence WLAIHAIGIPAVFFIGS. Residue His21 coordinates heme.

The protein belongs to the PsbE/PsbF family. In terms of assembly, heterodimer of an alpha subunit and a beta subunit. PSII is composed of 1 copy each of membrane proteins PsbA, PsbB, PsbC, PsbD, PsbE, PsbF, PsbH, PsbI, PsbJ, PsbK, PsbL, PsbM, PsbT, PsbX, PsbY, PsbZ, Psb30/Ycf12, at least 3 peripheral proteins of the oxygen-evolving complex and a large number of cofactors. It forms dimeric complexes. Heme b serves as cofactor.

The protein localises to the plastid. It localises to the cyanelle thylakoid membrane. This b-type cytochrome is tightly associated with the reaction center of photosystem II (PSII). PSII is a light-driven water:plastoquinone oxidoreductase that uses light energy to abstract electrons from H(2)O, generating O(2) and a proton gradient subsequently used for ATP formation. It consists of a core antenna complex that captures photons, and an electron transfer chain that converts photonic excitation into a charge separation. The sequence is that of Cytochrome b559 subunit beta from Cyanophora paradoxa.